Here is a 436-residue protein sequence, read N- to C-terminus: Repulsive guidance molecule B (436 aa).

An N-terminal signal peptide occupies residues M1–A48. N123 carries an N-linked (GlcNAc...) asparagine glycan. 2 disulfide bridges follow: C142–C229 and C166–C315. N386 is a glycosylation site (N-linked (GlcNAc...) asparagine). A lipid anchor (GPI-anchor amidated cysteine) is attached at C415. Positions G416–L436 are cleaved as a propeptide — removed in mature form.

Belongs to the repulsive guidance molecule (RGM) family. Homooligomer. Interacts with DRGX. Interacts with BMP2 and BMP4. Interacts with the BMP type I receptors ACVR1, BMPR1A and BMPR1B and with the BMP type II receptor ACVR2B. The functional complex with its receptor NEO1/neogenin appears to be a heterotetramer with a 2:2 stoichiometry, RGM molecules acting as staples that bring two NEO1 receptors together without interacting themselves, this arrangement leads to activation of downstream signaling via RhoA. Post-translationally, GPI-anchored. Autocatalytically cleaved at low pH; the two chains remain linked via two disulfide bonds. As to expression, detected in neonatal and adult dorsal root ganglion sensory neurons, spinal cord, and brain (at protein level). Also expressed at high levels in retinal ganglion cells of developing mouse, extending to the optic nerve (at protein level). Expressed in testis, epididymis, ovary, uterus, and pituitary.

It localises to the cell membrane. The protein localises to the membrane raft. Its function is as follows. Member of the repulsive guidance molecule (RGM) family that contributes to the patterning of the developing nervous system. Acts as a bone morphogenetic protein (BMP) coreceptor that potentiates BMP signaling. Promotes neuronal adhesion. May inhibit neurite outgrowth. This is Repulsive guidance molecule B from Mus musculus (Mouse).